Consider the following 344-residue polypeptide: Estradiol 17-beta-dehydrogenase 1 (344 aa).

3–32 contributes to the NAD(+) binding site; the sequence is STVVLITGCSSGIGLHLAVRLASDRSQSFK. Substrate is bound at residue Ser-143. The active-site Proton acceptor is the Tyr-156.

This sequence belongs to the short-chain dehydrogenases/reductases (SDR) family. In terms of assembly, homodimer.

The protein localises to the cytoplasm. It catalyses the reaction 17beta-estradiol + NAD(+) = estrone + NADH + H(+). The catalysed reaction is 17beta-estradiol + NADP(+) = estrone + NADPH + H(+). The protein operates within steroid biosynthesis; estrogen biosynthesis. Functionally, favors the reduction of estrogens and androgens. Uses preferentially NADH. The protein is Estradiol 17-beta-dehydrogenase 1 (Hsd17b1) of Rattus norvegicus (Rat).